The chain runs to 432 residues: Asparagine--tRNA ligase (432 aa).

The protein belongs to the class-II aminoacyl-tRNA synthetase family. As to quaternary structure, homodimer.

The protein resides in the cytoplasm. It catalyses the reaction tRNA(Asn) + L-asparagine + ATP = L-asparaginyl-tRNA(Asn) + AMP + diphosphate + H(+). In Lactobacillus gasseri (strain ATCC 33323 / DSM 20243 / BCRC 14619 / CIP 102991 / JCM 1131 / KCTC 3163 / NCIMB 11718 / NCTC 13722 / AM63), this protein is Asparagine--tRNA ligase.